Consider the following 203-residue polypeptide: Large ribosomal subunit protein bL25 (203 aa).

It belongs to the bacterial ribosomal protein bL25 family. CTC subfamily. As to quaternary structure, part of the 50S ribosomal subunit; part of the 5S rRNA/L5/L18/L25 subcomplex. Contacts the 5S rRNA. Binds to the 5S rRNA independently of L5 and L18.

This is one of the proteins that binds to the 5S RNA in the ribosome where it forms part of the central protuberance. The chain is Large ribosomal subunit protein bL25 from Pseudomonas savastanoi pv. phaseolicola (strain 1448A / Race 6) (Pseudomonas syringae pv. phaseolicola (strain 1448A / Race 6)).